Here is a 466-residue protein sequence, read N- to C-terminus: Oryzain beta chain (466 aa).

The N-terminal stretch at 1–21 is a signal peptide; sequence MAARAAAAAFLLLLIVGAATA. A propeptide spans 22–140 (activation peptide); that stretch reads APDMSIISYN…ERYRHDGVEE (119 aa). 3 disulfides stabilise this stretch: Cys162–Cys205, Cys196–Cys238, and Cys296–Cys347. Residue Cys165 is part of the active site. Active-site residues include His302 and Asn322. Residue Asn341 is glycosylated (N-linked (GlcNAc...) asparagine). Residues 358–380 are disordered; that stretch reads KSGANPPKPSPTPPTPPTPPPPS. A propeptide spans 362 to 466 (removed in mature form); sequence NPPKPSPTPP…KRTLAKLNTA (105 aa). Over residues 363-380 the composition is skewed to pro residues; that stretch reads PPKPSPTPPTPPTPPPPS. Disulfide bonds link Cys386–Cys398 and Cys392–Cys413. Asn389 carries N-linked (GlcNAc...) asparagine glycosylation.

It belongs to the peptidase C1 family. In terms of tissue distribution, expressed only in seeds.

Probable thiol protease. The sequence is that of Oryzain beta chain from Oryza sativa subsp. japonica (Rice).